The primary structure comprises 257 residues: Adenosylcobinamide-GDP ribazoletransferase (257 aa).

Transmembrane regions (helical) follow at residues 7–27 (QLTL…PTWV), 39–59 (RYFG…YEIT), 61–81 (GFLP…VVTG), 113–133 (IGTY…ILLS), 143–163 (VVTA…SLIF), and 196–216 (VLVL…GLVL).

This sequence belongs to the CobS family. Mg(2+) is required as a cofactor.

The protein resides in the cell inner membrane. It catalyses the reaction alpha-ribazole + adenosylcob(III)inamide-GDP = adenosylcob(III)alamin + GMP + H(+). The catalysed reaction is alpha-ribazole 5'-phosphate + adenosylcob(III)inamide-GDP = adenosylcob(III)alamin 5'-phosphate + GMP + H(+). The protein operates within cofactor biosynthesis; adenosylcobalamin biosynthesis; adenosylcobalamin from cob(II)yrinate a,c-diamide: step 7/7. Its function is as follows. Joins adenosylcobinamide-GDP and alpha-ribazole to generate adenosylcobalamin (Ado-cobalamin). Also synthesizes adenosylcobalamin 5'-phosphate from adenosylcobinamide-GDP and alpha-ribazole 5'-phosphate. The protein is Adenosylcobinamide-GDP ribazoletransferase of Shewanella woodyi (strain ATCC 51908 / MS32).